Reading from the N-terminus, the 838-residue chain is Lymphoid-specific helicase (838 aa).

Positions 30–115 form a coiled coil; it reads MLEEEEQLEA…SLKVKKGKNS (86 aa). Residues 94–108 are compositionally biased toward basic and acidic residues; the sequence is QKKKEKLERKKESLK. Positions 94–135 are disordered; it reads QKKKEKLERKKESLKVKKGKNSIDASEEKPVMRKKRGREDES. Serine 115 is modified (phosphoserine). The segment covering 119 to 134 has biased composition (basic and acidic residues); it reads SEEKPVMRKKRGREDE. The region spanning 235–403 is the Helicase ATP-binding domain; sequence RMLWENGING…WSLLNFLLPD (169 aa). 248–255 is a binding site for ATP; it reads DEMGLGKT. Residues 354–357 carry the DEAH box motif; that stretch reads DEGH. Serine 503 and serine 515 each carry phosphoserine. Residues 603 to 767 enclose the Helicase C-terminal domain; that stretch reads ILDRMLPELK…GLNLSKNFLD (165 aa).

The protein belongs to the SNF2/RAD54 helicase family. Highly expressed in proliferative tissues such as adult thymus and testis, and expressed at lower levels in uterus, small intestine, colon, and peripheral blood mononuclear cells. Also expressed in neoplastic cell lines including those derived from myeloid and lymphoid leukemias.

The protein localises to the nucleus. Plays an essential role in normal development and survival. Involved in regulation of the expansion or survival of lymphoid cells. Required for de novo or maintenance DNA methylation. May control silencing of the imprinted CDKN1C gene through DNA methylation. May play a role in formation and organization of heterochromatin, implying a functional role in the regulation of transcription and mitosis. The sequence is that of Lymphoid-specific helicase from Homo sapiens (Human).